Reading from the N-terminus, the 101-residue chain is Protein Tat (101 aa).

The interaction with human CREBBP stretch occupies residues 1–24; it reads MEPVDPNLEPWKHPGSQPRTACNN. The segment at 1–48 is transactivation; the sequence is MEPVDPNLEPWKHPGSQPRTACNNCYCKKCCFHCQVCFTKKGLGISYG. Zn(2+)-binding residues include cysteine 22, cysteine 25, and cysteine 27. Positions 22 to 37 are cysteine-rich; sequence CNNCYCKKCCFHCQVC. Residue lysine 28 is modified to N6-acetyllysine; by host PCAF. The Zn(2+) site is built by cysteine 30, histidine 33, cysteine 34, and cysteine 37. The tract at residues 38–48 is core; that stretch reads FTKKGLGISYG. The interval 47–101 is disordered; sequence YGRKKRRQRRRPPQDSQTHQSSLSKQPTSQLRGDPTGPTESKKKVERETETDPVH. Positions 48–57 are enriched in basic residues; sequence GRKKRRQRRR. The Nuclear localization signal, RNA-binding (TAR), and protein transduction motif lies at 49-57; that stretch reads RKKRRQRRR. Positions 49-86 are interaction with the host capping enzyme RNGTT; it reads RKKRRQRRRPPQDSQTHQSSLSKQPTSQLRGDPTGPTE. An N6-acetyllysine; by host EP300 and GCN5L2 mark is found at lysine 50 and lysine 51. Arginine 52 and arginine 53 each carry asymmetric dimethylarginine; by host PRMT6. The segment covering 61–77 has biased composition (polar residues); that stretch reads DSQTHQSSLSKQPTSQL. Lysine 71 participates in a covalent cross-link: Glycyl lysine isopeptide (Lys-Gly) (interchain with G-Cter in ubiquitin). A Cell attachment site motif is present at residues 78 to 80; sequence RGD. Over residues 86–101 the composition is skewed to basic and acidic residues; the sequence is ESKKKVERETETDPVH.

It belongs to the lentiviruses Tat family. In terms of assembly, interacts with host CCNT1. Associates with the P-TEFb complex composed at least of Tat, P-TEFb (CDK9 and CCNT1), TAR RNA, RNA Pol II. Recruits the HATs CREBBP, TAF1/TFIID, EP300, PCAF and GCN5L2. Interacts with host KAT5/Tip60; this interaction targets the latter to degradation. Interacts with the host deacetylase SIRT1. Interacts with host capping enzyme RNGTT; this interaction stimulates RNGTT. Binds to host KDR, and to the host integrins ITGAV/ITGB3 and ITGA5/ITGB1. Interacts with host KPNB1/importin beta-1 without previous binding to KPNA1/importin alpha-1. Interacts with EIF2AK2. Interacts with host nucleosome assembly protein NAP1L1; this interaction may be required for the transport of Tat within the nucleus, since the two proteins interact at the nuclear rim. Interacts with host C1QBP/SF2P32; this interaction involves lysine-acetylated Tat. Interacts with the host chemokine receptors CCR2, CCR3 and CXCR4. Interacts with host DPP4/CD26; this interaction may trigger an anti-proliferative effect. Interacts with host LDLR. Interacts with the host extracellular matrix metalloproteinase MMP1. Interacts with host PRMT6; this interaction mediates Tat's methylation. Interacts with, and is ubiquitinated by MDM2/Hdm2. Interacts with host PSMC3 and HTATIP2. Interacts with STAB1; this interaction may overcome SATB1-mediated repression of IL2 and IL2RA (interleukin) in T cells by binding to the same domain than HDAC1. Interacts (when acetylated) with human CDK13, thereby increasing HIV-1 mRNA splicing and promoting the production of the doubly spliced HIV-1 protein Nef. Interacts with host TBP; this interaction modulates the activity of transcriptional pre-initiation complex. Interacts with host RELA. Interacts with host PLSCR1; this interaction negatively regulates Tat transactivation activity by altering its subcellular distribution. In terms of processing, asymmetrical arginine methylation by host PRMT6 seems to diminish the transactivation capacity of Tat and affects the interaction with host CCNT1. Acetylation by EP300, CREBBP, GCN5L2/GCN5 and PCAF regulates the transactivation activity of Tat. EP300-mediated acetylation of Lys-50 promotes dissociation of Tat from the TAR RNA through the competitive binding to PCAF's bromodomain. In addition, the non-acetylated Tat's N-terminus can also interact with PCAF. PCAF-mediated acetylation of Lys-28 enhances Tat's binding to CCNT1. Lys-50 is deacetylated by SIRT1. Post-translationally, polyubiquitination by host MDM2 does not target Tat to degradation, but activates its transactivation function and fosters interaction with CCNT1 and TAR RNA. In terms of processing, phosphorylated by EIF2AK2 on serine and threonine residues adjacent to the basic region important for TAR RNA binding and function. Phosphorylation of Tat by EIF2AK2 is dependent on the prior activation of EIF2AK2 by dsRNA.

The protein resides in the host nucleus. Its subcellular location is the host nucleolus. The protein localises to the host cytoplasm. It is found in the secreted. Its function is as follows. Transcriptional activator that increases RNA Pol II processivity, thereby increasing the level of full-length viral transcripts. Recognizes a hairpin structure at the 5'-LTR of the nascent viral mRNAs referred to as the transactivation responsive RNA element (TAR) and recruits the cyclin T1-CDK9 complex (P-TEFb complex) that will in turn hyperphosphorylate the RNA polymerase II to allow efficient elongation. The CDK9 component of P-TEFb and other Tat-activated kinases hyperphosphorylate the C-terminus of RNA Pol II that becomes stabilized and much more processive. Other factors such as HTATSF1/Tat-SF1, SUPT5H/SPT5, and HTATIP2 are also important for Tat's function. Besides its effect on RNA Pol II processivity, Tat induces chromatin remodeling of proviral genes by recruiting the histone acetyltransferases (HATs) CREBBP, EP300 and PCAF to the chromatin. This also contributes to the increase in proviral transcription rate, especially when the provirus integrates in transcriptionally silent region of the host genome. To ensure maximal activation of the LTR, Tat mediates nuclear translocation of NF-kappa-B by interacting with host RELA. Through its interaction with host TBP, Tat may also modulate transcription initiation. Tat can reactivate a latently infected cell by penetrating in it and transactivating its LTR promoter. In the cytoplasm, Tat is thought to act as a translational activator of HIV-1 mRNAs. Functionally, extracellular circulating Tat can be endocytosed by surrounding uninfected cells via the binding to several surface receptors such as CD26, CXCR4, heparan sulfate proteoglycans (HSPG) or LDLR. Neurons are rarely infected, but they internalize Tat via their LDLR. Through its interaction with nuclear HATs, Tat is potentially able to control the acetylation-dependent cellular gene expression. Modulates the expression of many cellular genes involved in cell survival, proliferation or in coding for cytokines or cytokine receptors. Tat plays a role in T-cell and neurons apoptosis. Tat induced neurotoxicity and apoptosis probably contribute to neuroAIDS. Circulating Tat also acts as a chemokine-like and/or growth factor-like molecule that binds to specific receptors on the surface of the cells, affecting many cellular pathways. In the vascular system, Tat binds to ITGAV/ITGB3 and ITGA5/ITGB1 integrins dimers at the surface of endothelial cells and competes with bFGF for heparin-binding sites, leading to an excess of soluble bFGF. The chain is Protein Tat from Human immunodeficiency virus type 1 group M subtype B (isolate YU-2) (HIV-1).